The sequence spans 341 residues: Anthranilate phosphoribosyltransferase (341 aa).

5-phospho-alpha-D-ribose 1-diphosphate-binding positions include Gly-81, 84 to 85, Thr-89, 91 to 94, 109 to 117, and Ser-121; these read GD, NIST, and KHGSRSVSG. Gly-81 contacts anthranilate. Ser-93 is a Mg(2+) binding site. Residue Arg-167 coordinates anthranilate. Residues Asp-226 and Glu-227 each coordinate Mg(2+).

This sequence belongs to the anthranilate phosphoribosyltransferase family. Homodimer. The cofactor is Mg(2+).

It catalyses the reaction N-(5-phospho-beta-D-ribosyl)anthranilate + diphosphate = 5-phospho-alpha-D-ribose 1-diphosphate + anthranilate. It participates in amino-acid biosynthesis; L-tryptophan biosynthesis; L-tryptophan from chorismate: step 2/5. Its function is as follows. Catalyzes the transfer of the phosphoribosyl group of 5-phosphorylribose-1-pyrophosphate (PRPP) to anthranilate to yield N-(5'-phosphoribosyl)-anthranilate (PRA). This Methylococcus capsulatus (strain ATCC 33009 / NCIMB 11132 / Bath) protein is Anthranilate phosphoribosyltransferase.